The primary structure comprises 209 residues: MPLIGDKFPEMEVQTTHGPMELPDEFEGKWFILFSHPADFTPVCTTEFVAFQEVYPELRELDCELVGLSVDQVFSHIKWIEWIAENLDTEIEFPVIADTGRVADTLGLIHPARPTNTVRAVFVVDPEGIIRAILYYPQELGRNIPEIVRMIRAFRVIDAEGVAAPANWPDNQLIGDHVIVPPASDIETARKRKDEYECYDWWLCTQSRG.

The region spanning 2–156 (PLIGDKFPEM…IVRMIRAFRV (155 aa)) is the Thioredoxin domain. Cys-44 acts as the Cysteine sulfenic acid (-SOH) intermediate in catalysis. Residue Arg-119 participates in substrate binding. Cys-198 and Cys-204 are joined by a disulfide.

This sequence belongs to the peroxiredoxin family. Prx6 subfamily. As to quaternary structure, homodecamer. Pentamer of dimers that assemble into a ring structure.

It localises to the cytoplasm. It catalyses the reaction a hydroperoxide + [thioredoxin]-dithiol = an alcohol + [thioredoxin]-disulfide + H2O. In terms of biological role, thiol-specific peroxidase that catalyzes the reduction of hydrogen peroxide and organic hydroperoxides to water and alcohols, respectively. Plays a role in cell protection against oxidative stress by detoxifying peroxides. The polypeptide is Peroxiredoxin (Methanothermobacter thermautotrophicus (strain ATCC 29096 / DSM 1053 / JCM 10044 / NBRC 100330 / Delta H) (Methanobacterium thermoautotrophicum)).